The primary structure comprises 1715 residues: MGNSESQYTFQGSKNHSNTVTGAKQKPCSLKIRSVHAKDEKSLHGWTHGSSGAGYKSRSLARSCLSHFKNHQPYATRLSGPTCKVSKGTTYSKHRANTPGNDFQGNSGAFLPENGFHYVDRESEESHITSNGHLLTCYGRKESLASTPPGEDHRSPRVLIKTLGKLDGCLRVEFHNGGNPHKGTSEDPSGPVRLLRYSPTLASETCPVRETRRHSAAGSPSSQRPSPTDSRLRSSKGSSLSSESSWYDSPWGNAGEVSEVEGSFLAPSTPDPSLPSSFPPSDTKKPFNQSSSLSSLRELYKDPNLGCRSPSGTCLSSNEYISSQVSLNNRVSFASDMDVPSRVDHRDPLHYSSFTLPCRKSKALTEDAAKKDTLKARMRRFSDWTGSLSRKKRKLQEPRSMEGSEYFDSHSDGLNAEGQVPAQTSSLLWSGGSAQTLPHRSESTHAISVDPLRQNIYENFMRELEMSRSNTEHVETSTETMESSSESVSSLEQLDLLFEKEQGVVRKAGWLFFKPLVTLQKERKLELVARRKWKQYWVTLKGCTLLFYETYGKNSTEQNSAPRCALFAEDSIVQSVPEHPKKEHVFCLSNSCGDVYLFQATSQTDLENWVTAIHSACASLFAKKHGKEDTVRLLKSQTRSLLQKIDMDSKMKKMAELQLSVVSDPKNRKAIENQIRQWEQNLEKFHMDLFRMRCYLASLQGGELPNPKSLLAATSRPSKLALGRLGVLSVSSFHALVCSRDDSTLRKRTLSLTQRGKSKKGIFSSLKGLDTLARKGREKRASITQMFDSSHSHGFLGTQLPQKSTNSNKAHDLHLYGSAVDSALRDSMWEVQTYVHFQDNEGVTVTIKPEHRVEDVLALVCKMRQLEPTHYGLQLRKVVDKSVEWCVPALYEYMQEQVYDEIEVFPLSVYDVQLTKTGDMTDFGFAVTVQVDEHQHLNRIFISDVLPDSLAYGGGLRKGNEITSLNGEPVSDLDIQQMEALFSEKSVGLTLVARPVTTRRTLCASWSDSDLFSRDQKSLPPSPNQSQLLEEFLDNFRKTATSDFSNVPEITTGLKRSQTEGTLDQVPHREKMEQTFLSADQIAELCRDLNNTHTNSMEAPTESHDPPPRPLARHLSDADRLRKVIQELVDTEKSYVKDLSCLFELYLEPLQNETFLTQDEMESLFGSLPEMLEFQKVFLETLEDAISASSDFSVLETPSQFRKLLFSLGGSFLYYADHFKLYSGFCANHIKVQRVLERAKTDKAFKAFLDARNPTKQHSSTLESYLIKPVQRVLKYPLLLKELVSLTDHESEEHYHLTEALKAMEKVASHINEMQKIYEDYGMVFDQLVAEQSGTEKEVTELSMGELLMHSTVSWLNPFLSLGKARKDIELTVFVFKRAVILVYKENCKLKKKLPSNSRPAHNSADLDPFKFRWLIPISALQVRLGNTAGTENNSTWELIHTKSEIEGRPETIFQLCCSDSENKTSIVKVIRSILRENFRRHIKCELPLEKTCKDRLVPLKNRVPVSAKLASSRSLKGLRTSSSSEWPSEPSKGNSLDSDECSLSSGTQSSGCPVAESRRDSKSTELEKDAQEGLAEFPDGLIKESDILSDEDEDFHHPLKQGSPTKDIEIQFQRLKISEESDVHPVGQQPLTESGEQPKLVRGHFCPIKRKANSTKRGRGTLLKAQTRHQSLDSHPETASIDLNLVLEREFSVQSLTSVVNEEGFYETQSHGKS.

Composition is skewed to polar residues over residues 1-22 and 218-229; these read MGNSESQYTFQGSKNHSNTVTG and GSPSSQRPSPTD. Disordered stretches follow at residues 1 to 27, 174 to 249, 263 to 294, and 385 to 418; these read MGNSESQYTFQGSKNHSNTVTGAKQKP, FHNG…WYDS, SFLAPSTPDPSLPSSFPPSDTKKPFNQSSSLS, and TGSLSRKKRKLQEPRSMEGSEYFDSHSDGLNAEG. The N-myristoyl glycine moiety is linked to residue Gly2. Over residues 235-245 the composition is skewed to low complexity; that stretch reads SKGSSLSSESS. Over residues 395–411 the composition is skewed to basic and acidic residues; the sequence is LQEPRSMEGSEYFDSHS. The 115-residue stretch at 504-618 folds into the PH 1 domain; that stretch reads VVRKAGWLFF…WVTAIHSACA (115 aa). Residues 665-692 adopt a coiled-coil conformation; sequence PKNRKAIENQIRQWEQNLEKFHMDLFRM. The 72-residue stretch at 831–902 folds into the RBD domain; that stretch reads VQTYVHFQDN…YMQEQVYDEI (72 aa). Residues 911–997 enclose the PDZ domain; that stretch reads DVQLTKTGDM…GLTLVARPVT (87 aa). The interval 1092-1113 is disordered; it reads THTNSMEAPTESHDPPPRPLAR. The region spanning 1120–1314 is the DH domain; it reads RLRKVIQELV…EKVASHINEM (195 aa). A PH 2 domain is found at 1347-1478; the sequence is LLMHSTVSWL…KVIRSILREN (132 aa). The interval 1515–1582 is disordered; that stretch reads SLKGLRTSSS…EGLAEFPDGL (68 aa). Residues 1522–1532 show a composition bias toward low complexity; the sequence is SSSSEWPSEPS. A compositionally biased stretch (polar residues) spans 1533 to 1552; sequence KGNSLDSDECSLSSGTQSSG. Residues 1557–1572 show a composition bias toward basic and acidic residues; it reads ESRRDSKSTELEKDAQ. Ser1604 is modified (phosphoserine). Thr1662 bears the Phosphothreonine mark.

This sequence belongs to the TIAM family. As to quaternary structure, interacts with MAP1A, MAP1B, PARP1 and YWHAE. Interacts with CD44, PARD3 and MAPK8IP2. In terms of processing, phosphorylated on serine and threonine residues. Phosphorylated on Thr-1662 by Rho-kinase. Its phosphorylation by Rho-kinase inhibits its guanine nucleotide exchange activity, its interaction with MAP1A, MAP1B, PARP1 and YWHAE and reduces its ability to promote neurite growth. As to expression, expressed in fetal brain (at protein level). Expressed in the olfactory bulb, cortical plate of the cerebral cortex, caudate putamen, hippocampus, ependymal cells of the lateral surface of the lateral ventricles of the brain. Weakly expressed in heart, lung, liver, skeletal muscle, kidney and testis.

Its subcellular location is the cytoplasm. It is found in the cell projection. It localises to the lamellipodium. The protein resides in the filopodium. The protein localises to the growth cone. Its subcellular location is the neuron projection. It is found in the perikaryon. Its function is as follows. Modulates the activity of RHO-like proteins and connects extracellular signals to cytoskeletal activities. Acts as a GDP-dissociation stimulator protein that stimulates the GDP-GTP exchange activity of RHO-like GTPases and activates them. Activates specifically RAC1, but not CDC42 and RHOA. Mediates extracellular laminin signals to activate Rac1, contributing to neurite growth. Involved in lamellipodial formation and advancement of the growth cone of embryonic hippocampal neurons. Promotes migration of neurons in the cerebral cortex. When overexpressed, induces membrane ruffling accompanied by the accumulation of actin filaments along the altered plasma membrane. The polypeptide is Rho guanine nucleotide exchange factor TIAM2 (Mus musculus (Mouse)).